Here is a 305-residue protein sequence, read N- to C-terminus: MTHLPSFVDVHADVRNALETNAPVVALESTIITHGMPFPDNVEMAKAVEEEIRARGAIPATIAVLDGVLKIGLGADELEALAKVKDALKISRADIGYAISQGKSAGTTVAATMIVAQMAGIRVFATGGIGGVHKGVETSFDISADLTELGRTDVIVVAAGAKAILDVPKTLEVLETQGVSVVGYRTDTLPAFWTSGSDLDIPLRLDSAAEISEFQKVRDALRLGGGMLVANPIPAGDEIPAEIINGYIATAQAEMAAQSISGKAVTPFLLQRIFELSEGRSLRSNIALVKNNARLAADIAVALHS.

The active-site Proton donor is E28. Residues K89 and V109 each contribute to the substrate site. D141 provides a ligand contact to Mn(2+). 143–145 (SAD) serves as a coordination point for substrate. The active-site Nucleophile is the K162.

This sequence belongs to the pseudouridine-5'-phosphate glycosidase family. As to quaternary structure, homotrimer. Mn(2+) is required as a cofactor.

It catalyses the reaction D-ribose 5-phosphate + uracil = psi-UMP + H2O. Its function is as follows. Catalyzes the reversible cleavage of pseudouridine 5'-phosphate (PsiMP) to ribose 5-phosphate and uracil. Functions biologically in the cleavage direction, as part of a pseudouridine degradation pathway. In Dinoroseobacter shibae (strain DSM 16493 / NCIMB 14021 / DFL 12), this protein is Pseudouridine-5'-phosphate glycosidase.